Consider the following 556-residue polypeptide: Oxygen-dependent choline dehydrogenase (556 aa).

Position 4–33 (4–33 (DYIIIGAGSAGNVLATRLTEDPNTTVLLLE)) interacts with FAD. The Proton acceptor role is filled by His473.

Belongs to the GMC oxidoreductase family. FAD serves as cofactor.

The catalysed reaction is choline + A = betaine aldehyde + AH2. The enzyme catalyses betaine aldehyde + NAD(+) + H2O = glycine betaine + NADH + 2 H(+). It participates in amine and polyamine biosynthesis; betaine biosynthesis via choline pathway; betaine aldehyde from choline (cytochrome c reductase route): step 1/1. In terms of biological role, involved in the biosynthesis of the osmoprotectant glycine betaine. Catalyzes the oxidation of choline to betaine aldehyde and betaine aldehyde to glycine betaine at the same rate. The protein is Oxygen-dependent choline dehydrogenase of Escherichia coli O17:K52:H18 (strain UMN026 / ExPEC).